A 261-amino-acid chain; its full sequence is Methylmalonyl-CoA decarboxylase (261 aa).

Residues 64-68 (AGHDI), Gly110, Thr132, and Lys253 contribute to the substrate site.

It belongs to the enoyl-CoA hydratase/isomerase family. As to quaternary structure, dimer of homotrimers.

The enzyme catalyses (R)-methylmalonyl-CoA + H(+) = propanoyl-CoA + CO2. Functionally, catalyzes the decarboxylation of (R)-methylmalonyl-CoA to propionyl-CoA. Could be part of a pathway that converts succinate to propanoate. In Escherichia coli (strain K12), this protein is Methylmalonyl-CoA decarboxylase (scpB).